The primary structure comprises 439 residues: CBL-interacting serine/threonine-protein kinase 20 (439 aa).

The Protein kinase domain occupies tyrosine 12–phenylalanine 266. ATP is bound by residues leucine 18–valine 26 and lysine 41. Aspartate 134 acts as the Proton acceptor in catalysis. The tract at residues aspartate 152 to glutamate 181 is activation loop. Serine 156 is modified (phosphoserine). Threonine 170 bears the Phosphothreonine mark. The NAF domain maps to valine 297–glutamate 322. The tract at residues arginine 326–leucine 356 is PPI.

Belongs to the protein kinase superfamily. CAMK Ser/Thr protein kinase family. SNF1 subfamily. Mn(2+) serves as cofactor. Autophosphorylated. In terms of tissue distribution, confined to mature leaves.

The enzyme catalyses L-seryl-[protein] + ATP = O-phospho-L-seryl-[protein] + ADP + H(+). It carries out the reaction L-threonyl-[protein] + ATP = O-phospho-L-threonyl-[protein] + ADP + H(+). CIPK serine-threonine protein kinases interact with CBL proteins. Binding of a CBL protein to the regulatory NAF domain of CIPK protein lead to the activation of the kinase in a calcium-dependent manner. Required for the abscisic acid-mediated (ABA) signaling pathway involved in seed germination and growth elongation inhibition. The chain is CBL-interacting serine/threonine-protein kinase 20 (CIPK20) from Arabidopsis thaliana (Mouse-ear cress).